The primary structure comprises 742 residues: Cullin-2 (742 aa).

The region spanning 672–734 (DRRYAIDAAL…RDYLERDTDN (63 aa)) is the Cullin neddylation domain. Lys-686 is covalently cross-linked (Glycyl lysine isopeptide (Lys-Gly) (interchain with G-Cter in NEDD8)).

This sequence belongs to the cullin family. In terms of assembly, interacts with SKIP17 and FBW2/SKIP18. In terms of processing, neddylated; which enhances the ubiquitination activity of E3 ubiquitin-protein ligase complexes.

Core component of multiple SCF (SKP1-CUL1-F-box protein) E3 ubiquitin-protein ligase complexes. Involved in ubiquitination and subsequent proteasomal degradation of target proteins. This chain is Cullin-2 (CUL2), found in Arabidopsis thaliana (Mouse-ear cress).